Consider the following 187-residue polypeptide: ATP synthase subunit b 2 (187 aa).

The disordered stretch occupies residues 1–25 (MAESHGGAKGPAAGAHTGAEGGHGG). The helical transmembrane segment at 39–59 (LVSLAIFFVVLYVIVSKLALP) threads the bilayer. The disordered stretch occupies residues 103 to 122 (RAQAIGNESRDKANAQAETE). Residues 110-122 (ESRDKANAQAETE) are compositionally biased toward basic and acidic residues.

This sequence belongs to the ATPase B chain family. In terms of assembly, F-type ATPases have 2 components, F(1) - the catalytic core - and F(0) - the membrane proton channel. F(1) has five subunits: alpha(3), beta(3), gamma(1), delta(1), epsilon(1). F(0) has three main subunits: a(1), b(2) and c(10-14). The alpha and beta chains form an alternating ring which encloses part of the gamma chain. F(1) is attached to F(0) by a central stalk formed by the gamma and epsilon chains, while a peripheral stalk is formed by the delta and b chains.

It is found in the cell inner membrane. Its function is as follows. F(1)F(0) ATP synthase produces ATP from ADP in the presence of a proton or sodium gradient. F-type ATPases consist of two structural domains, F(1) containing the extramembraneous catalytic core and F(0) containing the membrane proton channel, linked together by a central stalk and a peripheral stalk. During catalysis, ATP synthesis in the catalytic domain of F(1) is coupled via a rotary mechanism of the central stalk subunits to proton translocation. Functionally, component of the F(0) channel, it forms part of the peripheral stalk, linking F(1) to F(0). The b'-subunit is a diverged and duplicated form of b found in plants and photosynthetic bacteria. The protein is ATP synthase subunit b 2 (atpF2) of Bradyrhizobium diazoefficiens (strain JCM 10833 / BCRC 13528 / IAM 13628 / NBRC 14792 / USDA 110).